Consider the following 106-residue polypeptide: Thioredoxin (106 aa).

K3 is subject to N6-acetyllysine. Positions 3-106 constitute a Thioredoxin domain; the sequence is KQIESKTAFQ…KLEATINELV (104 aa). At K8 the chain carries N6-succinyllysine. Active-site nucleophile residues include C32 and C35. An intrachain disulfide couples C32 to C35. K39 carries the N6-acetyllysine modification. 2 positions are modified to S-nitrosocysteine: C62 and C69. C73 carries the post-translational modification S-nitrosocysteine; alternate. K95 carries the post-translational modification N6-acetyllysine; alternate. An N6-succinyllysine; alternate modification is found at K95.

This sequence belongs to the thioredoxin family. In terms of assembly, homodimer; disulfide-linked. Interacts with TXNIP through the redox-active site. Interacts with MAP3K5 and CASP3. Interacts with APEX1; the interaction stimulates the FOS/JUN AP-1 DNA-binding activity in a redox-dependent manner. In terms of processing, in the fully reduced protein, both Cys-69 and Cys-73 are nitrosylated in response to nitric oxide (NO). When two disulfide bonds are present in the protein, only Cys-73 is nitrosylated. Cys-73 can serve as donor for nitrosylation of target proteins.

The protein resides in the nucleus. It localises to the cytoplasm. Its subcellular location is the secreted. Functionally, participates in various redox reactions through the reversible oxidation of its active center dithiol to a disulfide and catalyzes dithiol-disulfide exchange reactions. Plays a role in the reversible S-nitrosylation of cysteine residues in target proteins, and thereby contributes to the response to intracellular nitric oxide. Nitrosylates the active site Cys of CASP3 in response to nitric oxide (NO), and thereby inhibits caspase-3 activity. Induces the FOS/JUN AP-1 DNA binding activity in ionizing radiation (IR) cells through its oxidation/reduction status and stimulates AP-1 transcriptional activity. This is Thioredoxin (TXN) from Pongo abelii (Sumatran orangutan).